Reading from the N-terminus, the 189-residue chain is uncharacterized protein (189 aa).

Transmembrane regions (helical) follow at residues 4–21 (AIST…FLFR), 34–56 (AFYP…PLIL), 79–101 (LLVI…LIYS), 122–144 (RILS…VLLN), and 148–170 (ILHV…NLLV).

It localises to the cell membrane. This is an uncharacterized protein from Archaeoglobus fulgidus (strain ATCC 49558 / DSM 4304 / JCM 9628 / NBRC 100126 / VC-16).